The primary structure comprises 237 residues: Proteasome subunit beta type-1-B (237 aa).

It belongs to the peptidase T1B family. As to quaternary structure, the 26S proteasome consists of a 20S proteasome core and two 19S regulatory subunits. The 20S proteasome core is composed of 28 subunits that are arranged in four stacked rings, resulting in a barrel-shaped structure. The two end rings are each formed by seven alpha subunits, and the two central rings are each formed by seven beta subunits. The catalytic chamber with the active sites is on the inside of the barrel.

The protein localises to the cytoplasm. Its subcellular location is the nucleus. In terms of biological role, non-catalytic component of the proteasome, a multicatalytic proteinase complex which is characterized by its ability to cleave peptides with Arg, Phe, Tyr, Leu, and Glu adjacent to the leaving group at neutral or slightly basic pH. The proteasome has an ATP-dependent proteolytic activity. This chain is Proteasome subunit beta type-1-B (psmb1-B), found in Carassius auratus (Goldfish).